The primary structure comprises 329 residues: 4-hydroxythreonine-4-phosphate dehydrogenase (329 aa).

Substrate is bound by residues histidine 136 and threonine 137. Residues histidine 166, histidine 211, and histidine 266 each coordinate a divalent metal cation. Positions 274, 283, and 292 each coordinate substrate.

Belongs to the PdxA family. Homodimer. The cofactor is Zn(2+). Requires Mg(2+) as cofactor. It depends on Co(2+) as a cofactor.

The protein localises to the cytoplasm. It carries out the reaction 4-(phosphooxy)-L-threonine + NAD(+) = 3-amino-2-oxopropyl phosphate + CO2 + NADH. Its pathway is cofactor biosynthesis; pyridoxine 5'-phosphate biosynthesis; pyridoxine 5'-phosphate from D-erythrose 4-phosphate: step 4/5. Its function is as follows. Catalyzes the NAD(P)-dependent oxidation of 4-(phosphooxy)-L-threonine (HTP) into 2-amino-3-oxo-4-(phosphooxy)butyric acid which spontaneously decarboxylates to form 3-amino-2-oxopropyl phosphate (AHAP). The polypeptide is 4-hydroxythreonine-4-phosphate dehydrogenase (Pseudomonas putida (strain ATCC 47054 / DSM 6125 / CFBP 8728 / NCIMB 11950 / KT2440)).